Reading from the N-terminus, the 359-residue chain is Tropomodulin-1 (359 aa).

The disordered stretch occupies residues 39-61 (PDNALLPAGLRQKDQTTKAPTGP). The interval 39–138 (PDNALLPAGL…CDIAAILGMH (100 aa)) is tropomyosin-binding.

The protein belongs to the tropomodulin family. Binds to the N-terminus of tropomyosin and to actin. Interacts with FLII.

Its subcellular location is the cytoplasm. It localises to the cytoskeleton. Functionally, blocks the elongation and depolymerization of the actin filaments at the pointed end. The Tmod/TM complex contributes to the formation of the short actin protofilament, which in turn defines the geometry of the membrane skeleton. May play an important role in regulating the organization of actin filaments by preferentially binding to a specific tropomyosin isoform at its N-terminus. The chain is Tropomodulin-1 (TMOD1) from Bos taurus (Bovine).